The sequence spans 297 residues: HTH-type transcriptional regulator ArgP (297 aa).

The 57-residue stretch at 2-58 (FDYKLLSALAAVVEQAGFERAAQVLGLSQSAISQRIKLLEARVGQPVLVRGTPPSPT) folds into the HTH lysR-type domain. Positions 19–38 (FERAAQVLGLSQSAISQRIK) form a DNA-binding region, H-T-H motif.

The protein belongs to the LysR transcriptional regulatory family. As to quaternary structure, homodimer.

Its function is as follows. Controls the transcription of genes involved in arginine and lysine metabolism. This Pseudomonas fluorescens (strain Pf0-1) protein is HTH-type transcriptional regulator ArgP.